A 412-amino-acid polypeptide reads, in one-letter code: CHRNA7-FAM7A fusion protein (412 aa).

5 helical membrane passes run 144–164 (GLNL…VFLL), 172–192 (ISLG…VAEI), 205–225 (QYFA…VIVL), 240–254 (WTRV…WFLR), and 380–400 (LCLM…LMSA).

It belongs to the ligand-gated ion channel (TC 1.A.9) family. As to expression, expressed in hippocampus.

Its subcellular location is the membrane. This Homo sapiens (Human) protein is CHRNA7-FAM7A fusion protein (CHRFAM7A).